The following is a 398-amino-acid chain: UPF0229 protein Ccel_0490 (398 aa).

2 disordered regions span residues 1–22 (MAIFRDCSNIGKDRSAEDRRRH) and 68–104 (KSKPGVGAGDGNEKRGDKFPGDSQEGKGKGNAGNSEG). Basic and acidic residues-rich tracts occupy residues 11 to 22 (GKDRSAEDRRRH) and 78 to 95 (GNEKRGDKFPGDSQEGKG).

This sequence belongs to the UPF0229 family.

In Ruminiclostridium cellulolyticum (strain ATCC 35319 / DSM 5812 / JCM 6584 / H10) (Clostridium cellulolyticum), this protein is UPF0229 protein Ccel_0490.